A 162-amino-acid polypeptide reads, in one-letter code: UPF0305 protein MmarC7_1691 (162 aa).

Belongs to the UPF0305 family.

In Methanococcus maripaludis (strain C7 / ATCC BAA-1331), this protein is UPF0305 protein MmarC7_1691.